Consider the following 247-residue polypeptide: Sulfate transporter CysZ (247 aa).

The next 5 helical transmembrane spans lie at 29–49 (FVVLPLLANIILVGGAIFYLF), 66–86 (FLSWLTYILWPLLALTILATF), 141–160 (LLYILPKAIGLFLLLLIPAL), 164–186 (VGPVLWFIFTAWMLAIQYCDYPF), and 212–232 (VLVSVFTTIPILNLIVMPVAI).

This sequence belongs to the CysZ family.

It is found in the cell inner membrane. High affinity, high specificity proton-dependent sulfate transporter, which mediates sulfate uptake. Provides the sulfur source for the cysteine synthesis pathway. The chain is Sulfate transporter CysZ from Vibrio parahaemolyticus serotype O3:K6 (strain RIMD 2210633).